A 412-amino-acid polypeptide reads, in one-letter code: Inactive serine protease 35 (412 aa).

An N-terminal signal peptide occupies residues 1 to 23 (MGAMFFGLMLFTLGWTLIDGSES). Asn110 carries an N-linked (GlcNAc...) asparagine glycan. The Peptidase S1 domain maps to 124–407 (VYGTDSRFSI…ICLWMHGDDA (284 aa)). A disulfide bridge connects residues Cys154 and Cys170. The segment covering 192–207 (RNKGGGKRRRGSRRNR) has biased composition (basic residues). Residues 192–246 (RNKGGGKRRRGSRRNRREVSGAGREGSQDSLKETAKAGRRRKGSARRQRAADGRP) are disordered. Residues 217 to 227 (GSQDSLKETAK) are compositionally biased toward basic and acidic residues. Basic residues predominate over residues 228–239 (AGRRRKGSARRQ).

The protein belongs to the peptidase S1 family.

The protein resides in the secreted. This is Inactive serine protease 35 (PRSS35) from Bos taurus (Bovine).